Here is a 293-residue protein sequence, read N- to C-terminus: 4-hydroxybenzoate octaprenyltransferase (293 aa).

7 helical membrane-spanning segments follow: residues 25–45 (IGNF…AKGL), 48–68 (LKVL…GCVI), 101–121 (LFVV…PLTI), 142–162 (HFPQ…AFAA), 165–185 (GAVA…ATIY), 223–243 (VMLA…FWYL), and 271–291 (FLNN…DLHL).

This sequence belongs to the UbiA prenyltransferase family. The cofactor is Mg(2+).

The protein resides in the cell inner membrane. The enzyme catalyses all-trans-octaprenyl diphosphate + 4-hydroxybenzoate = 4-hydroxy-3-(all-trans-octaprenyl)benzoate + diphosphate. Its pathway is cofactor biosynthesis; ubiquinone biosynthesis. Its function is as follows. Catalyzes the prenylation of para-hydroxybenzoate (PHB) with an all-trans polyprenyl group. Mediates the second step in the final reaction sequence of ubiquinone-8 (UQ-8) biosynthesis, which is the condensation of the polyisoprenoid side chain with PHB, generating the first membrane-bound Q intermediate 3-octaprenyl-4-hydroxybenzoate. The sequence is that of 4-hydroxybenzoate octaprenyltransferase from Alkalilimnicola ehrlichii (strain ATCC BAA-1101 / DSM 17681 / MLHE-1).